A 60-amino-acid chain; its full sequence is Large ribosomal subunit protein bL33 (60 aa).

The protein belongs to the bacterial ribosomal protein bL33 family.

The chain is Large ribosomal subunit protein bL33 from Pelodictyon phaeoclathratiforme (strain DSM 5477 / BU-1).